Here is a 114-residue protein sequence, read N- to C-terminus: Large ribosomal subunit protein bL20 (114 aa).

The protein belongs to the bacterial ribosomal protein bL20 family.

Its function is as follows. Binds directly to 23S ribosomal RNA and is necessary for the in vitro assembly process of the 50S ribosomal subunit. It is not involved in the protein synthesizing functions of that subunit. This chain is Large ribosomal subunit protein bL20, found in Anaeromyxobacter dehalogenans (strain 2CP-1 / ATCC BAA-258).